The chain runs to 251 residues: Segregation and condensation protein A (251 aa).

The protein belongs to the ScpA family. As to quaternary structure, component of a cohesin-like complex composed of ScpA, ScpB and the Smc homodimer, in which ScpA and ScpB bind to the head domain of Smc. The presence of the three proteins is required for the association of the complex with DNA.

The protein localises to the cytoplasm. In terms of biological role, participates in chromosomal partition during cell division. May act via the formation of a condensin-like complex containing Smc and ScpB that pull DNA away from mid-cell into both cell halves. In Bacillus velezensis (strain DSM 23117 / BGSC 10A6 / LMG 26770 / FZB42) (Bacillus amyloliquefaciens subsp. plantarum), this protein is Segregation and condensation protein A.